Here is a 178-residue protein sequence, read N- to C-terminus: uncharacterized protein (178 aa).

This is an uncharacterized protein from Sinorhizobium fredii (strain NBRC 101917 / NGR234).